A 214-amino-acid chain; its full sequence is Glutathione S-transferase 1 (214 aa).

Residues 2-83 (APMKLYGAVM…YAARKNKPEL (82 aa)) form the GST N-terminal domain. Residues Ser-12, 41-42 (HK), 54-55 (QV), and 67-68 (ES) each bind glutathione. Residues 88–214 (NLEEAAMVDV…KVAALMKPSA (127 aa)) enclose the GST C-terminal domain.

Belongs to the GST superfamily. Phi family. In terms of assembly, homodimer or heterodimer of GST-I and GST-IV (=GST-II). In terms of tissue distribution, expressed in the stem and leaves, lower levels are seen in the pollen and endosperm.

The catalysed reaction is RX + glutathione = an S-substituted glutathione + a halide anion + H(+). Functionally, conjugation of reduced glutathione to a wide number of exogenous and endogenous hydrophobic electrophiles. Involved in the detoxification of certain herbicides. The polypeptide is Glutathione S-transferase 1 (GST1) (Zea mays (Maize)).